The chain runs to 283 residues: 2-hydroxy-6-oxononadienedioate/2-hydroxy-6-oxononatrienedioate hydrolase (283 aa).

An AB hydrolase-1 domain is found at 35 to 269 (VVVMFHGSGP…KCGHWAQWEH (235 aa)). Histidine 263 acts as the Proton acceptor in catalysis.

The protein belongs to the AB hydrolase superfamily. MhpC family. As to quaternary structure, homodimer.

The catalysed reaction is (2Z,4E)-2-hydroxy-6-oxonona-2,4-dienedioate + H2O = (2Z)-2-hydroxypenta-2,4-dienoate + succinate + H(+). It carries out the reaction (2Z,4E,7E)-2-hydroxy-6-oxonona-2,4,7-trienedioate + H2O = (2Z)-2-hydroxypenta-2,4-dienoate + fumarate + H(+). Its pathway is aromatic compound metabolism; 3-phenylpropanoate degradation. Its function is as follows. Catalyzes the cleavage of the C5-C6 bond of 2-hydroxy-6-oxononadienedioate and 2-hydroxy-6-oxononatrienedioate, a dienol ring fission product of the bacterial meta-cleavage pathway for degradation of phenylpropionic acid. This Pseudomonas sp protein is 2-hydroxy-6-oxononadienedioate/2-hydroxy-6-oxononatrienedioate hydrolase.